A 160-amino-acid chain; its full sequence is 6,7-dimethyl-8-ribityllumazine synthase (160 aa).

Residues Trp31, 65–67, and 89–91 contribute to the 5-amino-6-(D-ribitylamino)uracil site; these read SFE and CVV. Position 94–95 (94–95) interacts with (2S)-2-hydroxy-3-oxobutyl phosphate; the sequence is DT. The active-site Proton donor is His97. Residue Phe122 participates in 5-amino-6-(D-ribitylamino)uracil binding. Arg136 contributes to the (2S)-2-hydroxy-3-oxobutyl phosphate binding site.

This sequence belongs to the DMRL synthase family.

It catalyses the reaction (2S)-2-hydroxy-3-oxobutyl phosphate + 5-amino-6-(D-ribitylamino)uracil = 6,7-dimethyl-8-(1-D-ribityl)lumazine + phosphate + 2 H2O + H(+). It participates in cofactor biosynthesis; riboflavin biosynthesis; riboflavin from 2-hydroxy-3-oxobutyl phosphate and 5-amino-6-(D-ribitylamino)uracil: step 1/2. Catalyzes the formation of 6,7-dimethyl-8-ribityllumazine by condensation of 5-amino-6-(D-ribitylamino)uracil with 3,4-dihydroxy-2-butanone 4-phosphate. This is the penultimate step in the biosynthesis of riboflavin. This chain is 6,7-dimethyl-8-ribityllumazine synthase, found in Parabacteroides distasonis (strain ATCC 8503 / DSM 20701 / CIP 104284 / JCM 5825 / NCTC 11152).